The primary structure comprises 539 residues: Phosphoenolpyruvate carboxykinase (ATP) (539 aa).

The substrate site is built by arginine 59, tyrosine 200, and lysine 206. Residues lysine 206, histidine 225, and 242–250 (GLSGTGKTT) contribute to the ATP site. Mn(2+) contacts are provided by lysine 206 and histidine 225. Residue aspartate 263 coordinates Mn(2+). Residues glutamate 291, arginine 327, 447–448 (RI), and threonine 453 contribute to the ATP site. Arginine 327 provides a ligand contact to substrate.

Belongs to the phosphoenolpyruvate carboxykinase (ATP) family. The cofactor is Mn(2+).

The protein localises to the cytoplasm. It carries out the reaction oxaloacetate + ATP = phosphoenolpyruvate + ADP + CO2. It participates in carbohydrate biosynthesis; gluconeogenesis. Its function is as follows. Involved in the gluconeogenesis. Catalyzes the conversion of oxaloacetate (OAA) to phosphoenolpyruvate (PEP) through direct phosphoryl transfer between the nucleoside triphosphate and OAA. The polypeptide is Phosphoenolpyruvate carboxykinase (ATP) (Selenomonas ruminantium).